Here is a 263-residue protein sequence, read N- to C-terminus: MEAGAGGAGSDTKGGGSPATPEDPRSPAKPAAPEDPQMPAQPALPQLPRRPRTLDEDGAPSEDGAAGGSEPAPEDAPAQAAGEAGPVSKAAAGGAPHIGFVGEPPPYAPPDPKAAPLLYPPFPQVPVVLQPAPSALFPPPAQLYPAAPTPPALFSPPAGAAFPFPVYNGPMAGVPGPATVEHRPLPKDYMMESVLVTLFCCLLTGLIAIVYSHEARAALGRGDLAQAEEASRKARSLVLFSLLFGVFVSTSWVIYVVVALYLP.

The span at 1 to 17 (MEAGAGGAGSDTKGGGS) shows a compositional bias: gly residues. The tract at residues 1-107 (MEAGAGGAGS…IGFVGEPPPY (107 aa)) is disordered. Composition is skewed to low complexity over residues 37 to 47 (QMPAQPALPQL) and 75 to 86 (DAPAQAAGEAGP). Transmembrane regions (helical) follow at residues 190-210 (MMES…IAIV) and 238-258 (VLFS…YVVV).

The protein belongs to the CD225/Dispanin family.

The protein localises to the membrane. This is Proline rich transmembrane protein 1B from Homo sapiens (Human).